A 156-amino-acid polypeptide reads, in one-letter code: Small ribosomal subunit protein uS7 (156 aa).

This sequence belongs to the universal ribosomal protein uS7 family. Part of the 30S ribosomal subunit. Contacts proteins S9 and S11.

In terms of biological role, one of the primary rRNA binding proteins, it binds directly to 16S rRNA where it nucleates assembly of the head domain of the 30S subunit. Is located at the subunit interface close to the decoding center, probably blocks exit of the E-site tRNA. This chain is Small ribosomal subunit protein uS7, found in Caldanaerobacter subterraneus subsp. tengcongensis (strain DSM 15242 / JCM 11007 / NBRC 100824 / MB4) (Thermoanaerobacter tengcongensis).